We begin with the raw amino-acid sequence, 101 residues long: Small ribosomal subunit protein uS14 (101 aa).

This sequence belongs to the universal ribosomal protein uS14 family. As to quaternary structure, part of the 30S ribosomal subunit. Contacts proteins S3 and S10.

Binds 16S rRNA, required for the assembly of 30S particles and may also be responsible for determining the conformation of the 16S rRNA at the A site. The protein is Small ribosomal subunit protein uS14 of Enterobacter sp. (strain 638).